A 72-amino-acid chain; its full sequence is Nod factor export ATP-binding protein I (72 aa).

This sequence belongs to the ABC transporter superfamily. Lipooligosaccharide exporter (TC 3.A.1.102) family. As to quaternary structure, the complex is composed of two ATP-binding proteins (NodI) and two transmembrane proteins (NodJ).

The protein resides in the cell inner membrane. Part of the ABC transporter complex NodIJ involved in the export of the nodulation factors (Nod factors), the bacterial signal molecules that induce symbiosis and subsequent nodulation induction. Nod factors are LCO (lipo-chitin oligosaccharide), a modified beta-1,4-linked N-acetylglucosamine oligosaccharide. This subunit is responsible for energy coupling to the transport system. In Rhizobium leguminosarum bv. trifolii, this protein is Nod factor export ATP-binding protein I.